Reading from the N-terminus, the 227-residue chain is Cytochrome c oxidase subunit 2 (227 aa).

Residues 1-14 are Mitochondrial intermembrane-facing; sequence MAYPFQMGLQDATS. Residues 15-45 traverse the membrane as a helical segment; sequence PIMEELLHFHDHTLMIVFLISSLVLYIISLM. At 46-59 the chain is on the mitochondrial matrix side; it reads LTTKLTHTSTMDAQ. A helical membrane pass occupies residues 60–87; that stretch reads EVETIWTILPAIILILIALPSLRILYMM. The Mitochondrial intermembrane segment spans residues 88–227; it reads DEINNPSLTV…HFEKWSASLL (140 aa). Residues His-161, Cys-196, Glu-198, Cys-200, His-204, and Met-207 each contribute to the Cu cation site. Residue Glu-198 participates in Mg(2+) binding.

This sequence belongs to the cytochrome c oxidase subunit 2 family. As to quaternary structure, component of the cytochrome c oxidase (complex IV, CIV), a multisubunit enzyme composed of 14 subunits. The complex is composed of a catalytic core of 3 subunits MT-CO1, MT-CO2 and MT-CO3, encoded in the mitochondrial DNA, and 11 supernumerary subunits COX4I, COX5A, COX5B, COX6A, COX6B, COX6C, COX7A, COX7B, COX7C, COX8 and NDUFA4, which are encoded in the nuclear genome. The complex exists as a monomer or a dimer and forms supercomplexes (SCs) in the inner mitochondrial membrane with NADH-ubiquinone oxidoreductase (complex I, CI) and ubiquinol-cytochrome c oxidoreductase (cytochrome b-c1 complex, complex III, CIII), resulting in different assemblies (supercomplex SCI(1)III(2)IV(1) and megacomplex MCI(2)III(2)IV(2)). Found in a complex with TMEM177, COA6, COX18, COX20, SCO1 and SCO2. Interacts with TMEM177 in a COX20-dependent manner. Interacts with COX20. Interacts with COX16. The cofactor is Cu cation.

It is found in the mitochondrion inner membrane. It catalyses the reaction 4 Fe(II)-[cytochrome c] + O2 + 8 H(+)(in) = 4 Fe(III)-[cytochrome c] + 2 H2O + 4 H(+)(out). Its function is as follows. Component of the cytochrome c oxidase, the last enzyme in the mitochondrial electron transport chain which drives oxidative phosphorylation. The respiratory chain contains 3 multisubunit complexes succinate dehydrogenase (complex II, CII), ubiquinol-cytochrome c oxidoreductase (cytochrome b-c1 complex, complex III, CIII) and cytochrome c oxidase (complex IV, CIV), that cooperate to transfer electrons derived from NADH and succinate to molecular oxygen, creating an electrochemical gradient over the inner membrane that drives transmembrane transport and the ATP synthase. Cytochrome c oxidase is the component of the respiratory chain that catalyzes the reduction of oxygen to water. Electrons originating from reduced cytochrome c in the intermembrane space (IMS) are transferred via the dinuclear copper A center (CU(A)) of subunit 2 and heme A of subunit 1 to the active site in subunit 1, a binuclear center (BNC) formed by heme A3 and copper B (CU(B)). The BNC reduces molecular oxygen to 2 water molecules using 4 electrons from cytochrome c in the IMS and 4 protons from the mitochondrial matrix. This chain is Cytochrome c oxidase subunit 2 (MT-CO2), found in Ailurus fulgens (Himalayan red panda).